A 282-amino-acid chain; its full sequence is 4-hydroxy-3-methylbut-2-enyl diphosphate reductase (282 aa).

[4Fe-4S] cluster is bound at residue Cys12. (2E)-4-hydroxy-3-methylbut-2-enyl diphosphate-binding residues include His40 and His72. His40 and His72 together coordinate dimethylallyl diphosphate. His40 and His72 together coordinate isopentenyl diphosphate. Cys94 contacts [4Fe-4S] cluster. His122 serves as a coordination point for (2E)-4-hydroxy-3-methylbut-2-enyl diphosphate. His122 provides a ligand contact to dimethylallyl diphosphate. Isopentenyl diphosphate is bound at residue His122. Glu124 (proton donor) is an active-site residue. Thr160 is a binding site for (2E)-4-hydroxy-3-methylbut-2-enyl diphosphate. Residue Cys188 participates in [4Fe-4S] cluster binding. (2E)-4-hydroxy-3-methylbut-2-enyl diphosphate-binding residues include Ser216, Asn218, and Ser260. Dimethylallyl diphosphate-binding residues include Ser216, Asn218, and Ser260. Residues Ser216, Asn218, and Ser260 each coordinate isopentenyl diphosphate.

The protein belongs to the IspH family. The cofactor is [4Fe-4S] cluster.

The catalysed reaction is isopentenyl diphosphate + 2 oxidized [2Fe-2S]-[ferredoxin] + H2O = (2E)-4-hydroxy-3-methylbut-2-enyl diphosphate + 2 reduced [2Fe-2S]-[ferredoxin] + 2 H(+). It catalyses the reaction dimethylallyl diphosphate + 2 oxidized [2Fe-2S]-[ferredoxin] + H2O = (2E)-4-hydroxy-3-methylbut-2-enyl diphosphate + 2 reduced [2Fe-2S]-[ferredoxin] + 2 H(+). The protein operates within isoprenoid biosynthesis; dimethylallyl diphosphate biosynthesis; dimethylallyl diphosphate from (2E)-4-hydroxy-3-methylbutenyl diphosphate: step 1/1. Its pathway is isoprenoid biosynthesis; isopentenyl diphosphate biosynthesis via DXP pathway; isopentenyl diphosphate from 1-deoxy-D-xylulose 5-phosphate: step 6/6. Catalyzes the conversion of 1-hydroxy-2-methyl-2-(E)-butenyl 4-diphosphate (HMBPP) into a mixture of isopentenyl diphosphate (IPP) and dimethylallyl diphosphate (DMAPP). Acts in the terminal step of the DOXP/MEP pathway for isoprenoid precursor biosynthesis. The protein is 4-hydroxy-3-methylbut-2-enyl diphosphate reductase of Geotalea uraniireducens (strain Rf4) (Geobacter uraniireducens).